The primary structure comprises 161 residues: Troponin C, slow skeletal and cardiac muscles (161 aa).

Met-1 carries the N-acetylmethionine modification. EF-hand domains lie at 16-51 (QKNE…LGQN), 52-87 (PTPE…CMKD), 92-127 (KSEE…TGET), and 128-161 (ITED…KGVE). Residues Asp-65, Asp-67, Ser-69, Thr-71, and Glu-76 each contribute to the Ca(2+) site. The residue at position 98 (Ser-98) is a Phosphoserine. Ca(2+) is bound by residues Asp-105, Asn-107, Asp-109, Tyr-111, Glu-116, Asp-141, Asn-143, Asp-145, Arg-147, and Glu-152.

This sequence belongs to the troponin C family.

Its function is as follows. Troponin is the central regulatory protein of striated muscle contraction. Tn consists of three components: Tn-I which is the inhibitor of actomyosin ATPase, Tn-T which contains the binding site for tropomyosin and Tn-C. The binding of calcium to Tn-C abolishes the inhibitory action of Tn on actin filaments. In Bos taurus (Bovine), this protein is Troponin C, slow skeletal and cardiac muscles (TNNC1).